Here is a 302-residue protein sequence, read N- to C-terminus: Aspartate carbamoyltransferase catalytic subunit (302 aa).

Carbamoyl phosphate is bound by residues Arg-49 and Thr-50. Lys-77 is an L-aspartate binding site. Carbamoyl phosphate-binding residues include Arg-99, His-126, and Gln-129. 2 residues coordinate L-aspartate: Arg-159 and Arg-209. Residues Ala-250 and Pro-251 each coordinate carbamoyl phosphate.

The protein belongs to the aspartate/ornithine carbamoyltransferase superfamily. ATCase family. In terms of assembly, heterododecamer (2C3:3R2) of six catalytic PyrB chains organized as two trimers (C3), and six regulatory PyrI chains organized as three dimers (R2).

The enzyme catalyses carbamoyl phosphate + L-aspartate = N-carbamoyl-L-aspartate + phosphate + H(+). Its pathway is pyrimidine metabolism; UMP biosynthesis via de novo pathway; (S)-dihydroorotate from bicarbonate: step 2/3. Functionally, catalyzes the condensation of carbamoyl phosphate and aspartate to form carbamoyl aspartate and inorganic phosphate, the committed step in the de novo pyrimidine nucleotide biosynthesis pathway. This chain is Aspartate carbamoyltransferase catalytic subunit, found in Staphylococcus carnosus (strain TM300).